A 380-amino-acid polypeptide reads, in one-letter code: Apelin receptor (380 aa).

Residues 1–30 lie on the Extracellular side of the membrane; the sequence is MEEGGDFDNYYGADNQSECEYTDWKSSGAL. The N-linked (GlcNAc...) asparagine glycan is linked to Asn-15. 2 disulfides stabilise this stretch: Cys-19–Cys-281 and Cys-102–Cys-181. The chain crosses the membrane as a helical span at residues 31–54; sequence IPAIYMLVFLLGTTGNGLVLWTVF. Topologically, residues 55 to 64 are cytoplasmic; that stretch reads RSSREKRRSA. A helical membrane pass occupies residues 65 to 86; that stretch reads DIFIASLAVADLTFVVTLPLWA. Residues 87–99 lie on the Extracellular side of the membrane; that stretch reads TYTYRDYDWPFGT. A helical transmembrane segment spans residues 100–125; it reads FSCKLSSYLIFVNMYASVFCLTGLSF. Over 126 to 146 the chain is Cytoplasmic; it reads DRYLAIVRPVANARLRLRVSG. Residues 147-164 form a helical membrane-spanning segment; it reads AVATAVLWVLAALLAMPV. Residues 165–198 are Extracellular-facing; the sequence is MVFRTTGDLENTTKVQCYMDYSMVATVSSDWAWE. Asn-175 is a glycosylation site (N-linked (GlcNAc...) asparagine). A helical transmembrane segment spans residues 199 to 223; the sequence is VGLGVSSTTVGFVVPFTIMLTCYFF. Over 224 to 246 the chain is Cytoplasmic; sequence IAQTIAGHFRKERIEGLRKRRRL. A helical membrane pass occupies residues 247-270; it reads LSIIVVLVVTFALCWMPYHLVKTL. Residues 271–289 lie on the Extracellular side of the membrane; that stretch reads YMLGSLLHWPCDFDLFLMN. The chain crosses the membrane as a helical span at residues 290 to 312; the sequence is VFPYCTCISYVNSCLNPFLYAFF. Residues 313–380 are Cytoplasmic-facing; it reads DPRFRQACTS…PYSQETLVVD (68 aa). Over residues 342 to 351 the composition is skewed to low complexity; sequence KSASYSSGHS. Positions 342 to 380 are disordered; it reads KSASYSSGHSQGPGPNMGKGGEQMHEKSIPYSQETLVVD. Residues 371–380 are compositionally biased toward polar residues; the sequence is PYSQETLVVD.

This sequence belongs to the G-protein coupled receptor 1 family. As to quaternary structure, homodimer; dimerization inhibits APLNR-mediated G protein and beta-arrestin signaling pathways compared to monomeric APLNR.

The protein localises to the cell membrane. Functionally, g protein-coupled receptor for peptide hormones apelin (APLN) and apelin receptor early endogenous ligand (APELA/ELA), that plays a role in the regulation of normal cardiovascular function and fluid homeostasis. When acting as apelin receptor, activates both G(i) protein pathway that inhibits adenylate cyclase activity, and the beta-arrestin pathway that promotes internalization of the receptor. APLNR/APJ also functions as mechanoreceptor that is activated by pathological stimuli in a G-protein-independent fashion to induce beta-arrestin signaling, hence eliciting cardiac hypertrophy. However, the presence of apelin ligand blunts cardiac hypertrophic induction from APLNR/APJ on response to pathological stimuli. Plays a key role in early development such as gastrulation, blood vessels formation and heart morphogenesis by acting as a APELA receptor. May promote angioblast migration toward the embryonic midline, i.e. the position of the future vessel formation, during vasculogenesis. Promotes sinus venosus (SV)-derived endothelial cells migration into the developing heart to promote coronary blood vessel development. Also plays a role in various processes in adults such as regulation of blood vessel formation, blood pressure, heart contractility and heart failure. (Microbial infection) Alternative coreceptor with CD4 for HIV-1 infection; may be involved in the development of AIDS dementia. In Macaca mulatta (Rhesus macaque), this protein is Apelin receptor (APLNR).